Consider the following 1116-residue polypeptide: DUB-associated factor 1 (1116 aa).

7 WD repeats span residues 21–62, 91–132, 160–200, 219–262, 266–305, 387–426, and 428–466; these read AHIL…NEPE, KNSD…DHDD, VHDG…EKMA, SMSP…EVIR, AHRT…DQTT, KKYG…FSVN, and GGFA…LLNT. Positions 578–600 are disordered; that stretch reads LDTGYNSESKKNNKDKKRKSTFK. S668 is subject to Phosphoserine. At T693 the chain carries Phosphothreonine. Over residues 747 to 776 the composition is skewed to polar residues; the sequence is ISSQDLPSNNTHNKLRSSENSRANSTSTLE. Disordered regions lie at residues 747–784 and 963–994; these read ISSQ…KKPE and FISA…PSTQ. A compositionally biased stretch (low complexity) spans 967–987; that stretch reads SDTTESSGNDSSDSSLGNGNE.

Interacts (via its WD repeats) with ubiquitin.

The protein localises to the cytoplasm. Functionally, ubiquitin-binding protein involved in the resistance to phenanthroline, sanguinarine, nordihydroguaiaretic acid (NDGA), isopropyl (N-3-chloro-phenyl)-carbamate (IPCPC) and guanosine 5'-O-(2-thiodiphosphate). The sequence is that of DUB-associated factor 1 from Saccharomyces cerevisiae (strain ATCC 204508 / S288c) (Baker's yeast).